The primary structure comprises 182 residues: UPF0397 protein YdcD (182 aa).

A run of 5 helical transmembrane segments spans residues 8–28, 42–62, 74–94, 114–134, and 146–166; these read IVVA…LINI, AVLA…IGFI, APWW…AFGV, IVQF…GDVL, and QGIV…TLLL.

This sequence belongs to the UPF0397 family.

Its subcellular location is the cell membrane. The polypeptide is UPF0397 protein YdcD (ydcD) (Lactococcus lactis subsp. lactis (strain IL1403) (Streptococcus lactis)).